Here is a 95-residue protein sequence, read N- to C-terminus: Small integral membrane protein 18 (95 aa).

The helical transmembrane segment at 35–55 (CFVILLLFIFTVVSLVVLAFL) threads the bilayer.

It localises to the membrane. The polypeptide is Small integral membrane protein 18 (SMIM18) (Homo sapiens (Human)).